The following is a 248-amino-acid chain: Something about silencing protein 5 (248 aa).

The YEATS domain maps to 1 to 139 (MDHSIEVTFR…SELSKYFDLP (139 aa)). Ser-144 carries the phosphoserine modification. The segment at 223–248 (TKQERTNFGSDAIHKDEPVKAHNKLK) is disordered.

Component of the SAS complex, at least composed of SAS2, SAS4 and SAS5. These three proteins constitute the core of the complex, and are sufficient to acetylate histones.

The protein localises to the nucleus. Functionally, component of the SAS complex, a multiprotein complex that acetylates 'Lys-16' of histone H4 and 'Lys-14' of histone H3. The SAS complex is however unable to acetylate nucleosomal histones. The complex is involved in transcriptional silencing at telomeres and at HML locus. Also involved in rDNA silencing. In the complex, SAS5 is required for maximal histone acetyltransferase (HAT) activity of the complex, suggesting that it may be required to stabilize the complex or help in substrate recognition. The protein is Something about silencing protein 5 (SAS5) of Saccharomyces cerevisiae (strain ATCC 204508 / S288c) (Baker's yeast).